The primary structure comprises 1040 residues: DNA mismatch repair protein MutS (1040 aa).

Residues 1–10 are compositionally biased toward polar residues; that stretch reads MPVKPSAQNN. Disordered stretches follow at residues 1–22 and 130–157; these read MPVK…SVPV and ATGT…SKST. Residues 11-22 show a composition bias toward low complexity; it reads SPSKPTSKSVPV. Over residues 130-143 the composition is skewed to polar residues; sequence ATGTDNANNPSNAP. 759 to 766 contacts ATP; it reads GPNMGGKS.

Belongs to the DNA mismatch repair MutS family.

This protein is involved in the repair of mismatches in DNA. It is possible that it carries out the mismatch recognition step. This protein has a weak ATPase activity. The polypeptide is DNA mismatch repair protein MutS (Psychrobacter cryohalolentis (strain ATCC BAA-1226 / DSM 17306 / VKM B-2378 / K5)).